Here is a 77-residue protein sequence, read N- to C-terminus: DNA-directed RNA polymerase subunit omega (77 aa).

The protein belongs to the RNA polymerase subunit omega family. As to quaternary structure, the RNAP catalytic core consists of 2 alpha, 1 beta, 1 beta' and 1 omega subunit. When a sigma factor is associated with the core the holoenzyme is formed, which can initiate transcription.

The enzyme catalyses RNA(n) + a ribonucleoside 5'-triphosphate = RNA(n+1) + diphosphate. In terms of biological role, promotes RNA polymerase assembly. Latches the N- and C-terminal regions of the beta' subunit thereby facilitating its interaction with the beta and alpha subunits. The chain is DNA-directed RNA polymerase subunit omega from Nitratidesulfovibrio vulgaris (strain ATCC 29579 / DSM 644 / CCUG 34227 / NCIMB 8303 / VKM B-1760 / Hildenborough) (Desulfovibrio vulgaris).